Consider the following 456-residue polypeptide: Antizyme inhibitor 2 (456 aa).

The active-site Proton donor; shared with dimeric partner is C357.

The protein belongs to the Orn/Lys/Arg decarboxylase class-II family. ODC antizyme inhibitor subfamily. As to quaternary structure, monomer. Interacts with OAZ1; this interaction disrupts the interaction between the antizyme and ODC1. Does not form a heterodimer with ODC1.

It localises to the nucleus. It is found in the cytoplasm. The protein localises to the perinuclear region. Its subcellular location is the membrane. The protein resides in the cytoplasmic vesicle. It localises to the endoplasmic reticulum-Golgi intermediate compartment. It is found in the golgi apparatus. The protein localises to the cis-Golgi network. Its subcellular location is the trans-Golgi network. The protein resides in the cytoplasmic granule. It localises to the cell projection. It is found in the axon. The protein localises to the dendrite. Its subcellular location is the perikaryon. Its function is as follows. Antizyme inhibitor (AZI) protein that positively regulates ornithine decarboxylase (ODC) activity and polyamine uptake. AZI is an enzymatically inactive ODC homolog that counteracts the negative effect of ODC antizyme (AZ) on ODC activity by competing with ODC for antizyme-binding. Inhibits antizyme-dependent ODC degradation and releases ODC monomers from their inactive complex with antizymes, leading to formation of the catalytically active ODC homodimer and restoring polyamine production. Participates in the morphological integrity of the trans-Golgi network (TGN) and functions as a regulator of intracellular secretory vesicle trafficking. In Xenopus laevis (African clawed frog), this protein is Antizyme inhibitor 2 (azin2).